We begin with the raw amino-acid sequence, 242 residues long: DNA repair protein RecO (242 aa).

It belongs to the RecO family. As to quaternary structure, monomer.

Functionally, involved in DNA repair and RecF pathway recombination. The polypeptide is DNA repair protein RecO (Salmonella schwarzengrund (strain CVM19633)).